The sequence spans 145 residues: Large ribosomal subunit protein uL11 (145 aa).

Belongs to the universal ribosomal protein uL11 family. In terms of assembly, part of the ribosomal stalk of the 50S ribosomal subunit. Interacts with L10 and the large rRNA to form the base of the stalk. L10 forms an elongated spine to which L12 dimers bind in a sequential fashion forming a multimeric L10(L12)X complex. One or more lysine residues are methylated.

Functionally, forms part of the ribosomal stalk which helps the ribosome interact with GTP-bound translation factors. This is Large ribosomal subunit protein uL11 from Persephonella marina (strain DSM 14350 / EX-H1).